A 382-amino-acid chain; its full sequence is Proton extrusion protein PxcA (382 aa).

4 consecutive transmembrane segments (helical) span residues Val162–Ile182, Ala257–Met277, Ile305–Leu325, and Phe340–Ile360.

Belongs to the CemA family.

Its subcellular location is the cell inner membrane. In terms of biological role, required for H(+) efflux immediately after light irradiation to form a rapid H(+) concentration gradient across the thylakoid membranes. Together with PxcL, contributes to transient H(+) uptake following dark to light transition. This chain is Proton extrusion protein PxcA, found in Synechococcus sp. (strain CC9605).